We begin with the raw amino-acid sequence, 281 residues long: Transcription factor HES-1 (281 aa).

Positions 1–44 are disordered; sequence MPADIMEKNSSSPVAATPASVNTTPDKPKTASEHRKSSKPIMEK. Low complexity predominate over residues 10-21; that stretch reads SSSPVAATPASV. A compositionally biased stretch (basic and acidic residues) spans 26–35; it reads DKPKTASEHR. The bHLH domain maps to 34-91; sequence HRKSSKPIMEKRRRARINESLSQLKTLILDALKKDSSRHSKLEKADILEMTVKHLRNL. In terms of domain architecture, Orange spans 110–143; sequence YRAGFSECMNEVTRFLSTCEGVNTEVRTRLLGHL. Disordered regions lie at residues 158–206 and 255–281; these read QAHP…PCKL and TSVG…PWRN. Pro residues-rich tracts occupy residues 164 to 174 and 182 to 201; these read QAPPPPPPSGP and FAPP…PPGS. Residues 255–272 show a composition bias toward polar residues; that stretch reads TSVGPNAVSPSSGSSLTA. The WRPW motif signature appears at 276 to 279; that stretch reads WRPW.

In terms of assembly, interacts with SIRT1. Interacts weakly with TLE2. Interacts with HES6. Transcription repression requires formation of a complex with a corepressor protein of the Groucho/TLE family. Interacts (via WPRW motif) with TLE1. Interacts with an FA complex, composed of FANCA, FANCF, FANCG and FANCL, but not of FANCC, nor FANCE. Present in all tissues examined but highest in epithelial cells and in mesoderm-derived tissues such as embryonal muscle cells.

The protein localises to the nucleus. In terms of biological role, transcriptional repressor of genes that require a bHLH protein for their transcription. May act as a negative regulator of myogenesis by inhibiting the functions of MYOD1 and ASH1. Binds DNA on N-box motifs: 5'-CACNAG-3' with high affinity and on E-box motifs: 5'-CANNTG-3' with low affinity. May play a role in a functional FA core complex response to DNA cross-link damage, being required for the stability and nuclear localization of FA core complex proteins, as well as for FANCD2 monoubiquitination in response to DNA damage. The protein is Transcription factor HES-1 (Hes1) of Rattus norvegicus (Rat).